The following is a 370-amino-acid chain: Gap junction delta-4 protein (370 aa).

The Cytoplasmic portion of the chain corresponds to 1 to 19 (MEGVDLLGFLIITLNCNVT). A helical membrane pass occupies residues 20-40 (MXGKLWFVLTMLLRMLVIVLA). Residues 41 to 76 (GRPVYQDEQERFVCNTLQPGCANVCYDVFSPVSHLR) lie on the Extracellular side of the membrane. A helical transmembrane segment spans residues 77–97 (FWLIQGVCVLLPSAVFSVYVL). Topologically, residues 98-146 (HRGATLAALGPRRCPEPRDTASGQRRCPGSCRERGGLEVPDFSAGYIIH) are cytoplasmic. Residues 147-167 (LLLRTLLEAAFGALNYLLFGF) traverse the membrane as a helical segment. Residues 168–196 (LAPNKFPCTRPPCTGVVDCYVSRPTEKSL) are Extracellular-facing. The chain crosses the membrane as a helical span at residues 197-217 (LMLFLWAVSALSFLLGLADLV). Topologically, residues 218 to 370 (CSLRRLMRRR…HLRARKSEWV (153 aa)) are cytoplasmic. A disordered region spans residues 227 to 370 (RPGPPTSPSI…HLRARKSEWV (144 aa)). A compositionally biased stretch (basic and acidic residues) spans 246–260 (PEGRPTDKEGGREQE). The span at 331 to 345 (PSAAPSHLAAHPSCS) shows a compositional bias: low complexity.

Belongs to the connexin family. Delta-type subfamily. In terms of assembly, a connexon is composed of a hexamer of connexins.

It localises to the cell membrane. It is found in the cell junction. The protein resides in the gap junction. Its function is as follows. One gap junction consists of a cluster of closely packed pairs of transmembrane channels, the connexons, through which materials of low MW diffuse from one cell to a neighboring cell. This is Gap junction delta-4 protein (GJD4) from Macaca fascicularis (Crab-eating macaque).